Reading from the N-terminus, the 350-residue chain is Biotin synthase (350 aa).

The segment covering 1 to 13 (MVTQAATRPSNDA) has biased composition (polar residues). The tract at residues 1–20 (MVTQAATRPSNDAGQDGVTE) is disordered. One can recognise a Radical SAM core domain in the interval 71 to 296 (PEVEVEGIIS…RTMLRFAGGR (226 aa)). Cysteine 86, cysteine 90, and cysteine 93 together coordinate [4Fe-4S] cluster. [2Fe-2S] cluster contacts are provided by cysteine 129, cysteine 162, cysteine 221, and arginine 291.

It belongs to the radical SAM superfamily. Biotin synthase family. In terms of assembly, homodimer. [4Fe-4S] cluster is required as a cofactor. Requires [2Fe-2S] cluster as cofactor.

The catalysed reaction is (4R,5S)-dethiobiotin + (sulfur carrier)-SH + 2 reduced [2Fe-2S]-[ferredoxin] + 2 S-adenosyl-L-methionine = (sulfur carrier)-H + biotin + 2 5'-deoxyadenosine + 2 L-methionine + 2 oxidized [2Fe-2S]-[ferredoxin]. Its pathway is cofactor biosynthesis; biotin biosynthesis; biotin from 7,8-diaminononanoate: step 2/2. Its function is as follows. Catalyzes the conversion of dethiobiotin (DTB) to biotin by the insertion of a sulfur atom into dethiobiotin via a radical-based mechanism. In Mycobacterium ulcerans (strain Agy99), this protein is Biotin synthase.